The sequence spans 181 residues: MGNVFGSLFKGLFGKKEMRILMVGLDAAGKTTILYKLKLGEIVTTIPTIGFNVETVEYKNISFTVWDVGGQDKIRPLWRHYFQNTQGLIFVVDSNDRERVGEAREELMRMLAEDELRDAVLLVFANKQDLPQAMNAAEVTDKLGLHSLRNRSWYIQATCATSGDGLYEGLDWLSNQLKNRS.

Residue glycine 2 is the site of N-myristoyl glycine attachment. The important for the stable binding to the membranes stretch occupies residues asparagine 3 to lysine 16. GTP is bound by residues glycine 24 to threonine 32, asparagine 126 to aspartate 129, and alanine 160.

It belongs to the small GTPase superfamily. Arf family.

The protein localises to the golgi apparatus membrane. The enzyme catalyses GTP + H2O = GDP + phosphate + H(+). Alternates between an inactive GDP-bound form and an active GTP-bound form. Activated by a guanine nucleotide-exchange factor (GEF) and inactivated by GTPase-activating protein (GAP). Its function is as follows. Small GTPase involved in protein trafficking between different compartments. Modulates vesicle budding and uncoating within the Golgi complex. In its GTP-bound form, triggers the recruitment of coatomer proteins to the Golgi membrane. The hydrolysis of ARF1-bound GTP, which is mediated by ARFGAPs proteins, is required for dissociation of coat proteins from Golgi membranes and vesicles. Involved in endoplasmic reticulum dynamics during embryogenesis. Also required for adult germline function. Plays a role in cell shedding during embryogenesis probably by promoting the endocytosis of cell adhesion molecules. During neurogenesis, involved in cell autonomous Q.p neuroblast asymmetric divisions that generate one precursor cell and one apoptotic cell, probably by controlling endocytosis. Plays a role in maintaining mitochondrial morphology. This chain is ADP-ribosylation factor 1-like 2 (arf-1.2), found in Caenorhabditis briggsae.